The chain runs to 81 residues: Acyl carrier protein (81 aa).

A Carrier domain is found at 2–80; that stretch reads ASNEEILAGL…DAVSFIANAQ (79 aa). Position 40 is an O-(pantetheine 4'-phosphoryl)serine (S40).

This sequence belongs to the acyl carrier protein (ACP) family. Post-translationally, 4'-phosphopantetheine is transferred from CoA to a specific serine of apo-ACP by AcpS. This modification is essential for activity because fatty acids are bound in thioester linkage to the sulfhydryl of the prosthetic group.

It is found in the cytoplasm. It functions in the pathway lipid metabolism; fatty acid biosynthesis. Functionally, carrier of the growing fatty acid chain in fatty acid biosynthesis. In Paenarthrobacter aurescens (strain TC1), this protein is Acyl carrier protein.